Here is a 245-residue protein sequence, read N- to C-terminus: Probable 2-phosphosulfolactate phosphatase (245 aa).

The protein belongs to the ComB family. Mg(2+) serves as cofactor.

The enzyme catalyses (2R)-O-phospho-3-sulfolactate + H2O = (2R)-3-sulfolactate + phosphate. This Trichormus variabilis (strain ATCC 29413 / PCC 7937) (Anabaena variabilis) protein is Probable 2-phosphosulfolactate phosphatase.